The sequence spans 245 residues: Ubiquinone/menaquinone biosynthesis C-methyltransferase UbiE (245 aa).

S-adenosyl-L-methionine is bound by residues Thr71, Asp92, and 118–119 (DA).

The protein belongs to the class I-like SAM-binding methyltransferase superfamily. MenG/UbiE family.

The enzyme catalyses a 2-demethylmenaquinol + S-adenosyl-L-methionine = a menaquinol + S-adenosyl-L-homocysteine + H(+). It catalyses the reaction a 2-methoxy-6-(all-trans-polyprenyl)benzene-1,4-diol + S-adenosyl-L-methionine = a 5-methoxy-2-methyl-3-(all-trans-polyprenyl)benzene-1,4-diol + S-adenosyl-L-homocysteine + H(+). It functions in the pathway quinol/quinone metabolism; menaquinone biosynthesis; menaquinol from 1,4-dihydroxy-2-naphthoate: step 2/2. The protein operates within cofactor biosynthesis; ubiquinone biosynthesis. In terms of biological role, methyltransferase required for the conversion of demethylmenaquinol (DMKH2) to menaquinol (MKH2) and the conversion of 2-polyprenyl-6-methoxy-1,4-benzoquinol (DDMQH2) to 2-polyprenyl-3-methyl-6-methoxy-1,4-benzoquinol (DMQH2). The polypeptide is Ubiquinone/menaquinone biosynthesis C-methyltransferase UbiE (Neisseria meningitidis serogroup B (strain ATCC BAA-335 / MC58)).